We begin with the raw amino-acid sequence, 260 residues long: Transcription factor MYB4 (260 aa).

HTH myb-type domains follow at residues 12–64 and 65–119; these read AVEV…LNYL and RPGI…SKRS. 2 DNA-binding regions (H-T-H motif) span residues 40 to 64 and 92 to 115; these read WRMLPAKAGLKRCGKSCRLRWLNYL and WSIIAGRIPGRTDNEIKNHWNTHL.

It is found in the nucleus. In terms of biological role, transcription activator involved in the spatiotemporal regulation of flavonoid biosynthesis specifically in the corms of Montbretia. Activates the promoters of enzymes involved in the biosynthesis of the flavonol myricetin and the flavonol-glycoside montbretin A (MbA). MbA is a potent inhibitor of human pancreatic alpha-amylase and is being developed as drug candidate to treat type-2 diabetes. This Crocosmia x crocosmiiflora (Montbretia) protein is Transcription factor MYB4.